Reading from the N-terminus, the 270-residue chain is Putative pyruvate, phosphate dikinase regulatory protein (270 aa).

151-158 (GVSRTSKT) serves as a coordination point for ADP.

It belongs to the pyruvate, phosphate/water dikinase regulatory protein family. PDRP subfamily.

It carries out the reaction N(tele)-phospho-L-histidyl/L-threonyl-[pyruvate, phosphate dikinase] + ADP = N(tele)-phospho-L-histidyl/O-phospho-L-threonyl-[pyruvate, phosphate dikinase] + AMP + H(+). It catalyses the reaction N(tele)-phospho-L-histidyl/O-phospho-L-threonyl-[pyruvate, phosphate dikinase] + phosphate + H(+) = N(tele)-phospho-L-histidyl/L-threonyl-[pyruvate, phosphate dikinase] + diphosphate. Bifunctional serine/threonine kinase and phosphorylase involved in the regulation of the pyruvate, phosphate dikinase (PPDK) by catalyzing its phosphorylation/dephosphorylation. This Bacillus velezensis (strain DSM 23117 / BGSC 10A6 / LMG 26770 / FZB42) (Bacillus amyloliquefaciens subsp. plantarum) protein is Putative pyruvate, phosphate dikinase regulatory protein.